A 1214-amino-acid polypeptide reads, in one-letter code: MVKLFGKSKKKEESPQSIDIAFQSILDEIGVVETEKKHLMATMDTVRKQQLIQSYSSKKFSKNEFGNKSKKKSIITQSPHYFVDCLKNDPSKEVLTSLRVRLGNQPLKWLKEFLSLDGVSLLIKVLILNEIKQVKNQEDIYKIAQCLHSLKLIMNTKFGLESVIKQPTNIHSISLVMDTPHLKTRIMVIELLAALCVVNSKGLPLVLSAMDNYREVKREKKPFIHLFQGLKNPSGSLQATTFALINTLISSSQSVEERQKIRNQFKKLGITKVIEELEPEYANNPDLATQKDLYEQECRWDEQEQIENARGDISDENPEALVKAILDRTAGGPLYSSFTSILRLLANSITDQTKDQSLSNYLFVEKVIGKMNNGESYLDDIGTFFGGGGGGDGSLDIAHVSGEKAVLIQKEIEDLKKQKKRDQDKLAEKDKLLTKLAKRMRKMEEAIKLGKGLEYLNNQIEIESPPDSSTSTPQETTPGGTKVPLKTSPVTKADLKHKLSTFTTAKAPNGVSDFLSGLDTTNQQGSTDASQTEAGSGDGIPLPPGAPPPPPPPGGKLAPSTPQLCSRPPSIKMKSYQWTRYRTRNVTNTFWKNVNLTKYNDCLPHEQIEGLFGAAIFEKKEKELKKGSEVTVIDTKRAQNIGILLSRFKNVTHDAIYDAIYSLDESILDLETINQFIKYIPSKEEIDCIIAFKQQQEQLPEEERMKLGKSEIFIDKISTIPRLEQRIQALHFKLNFPDKLYHAKPDIRKFNEAFVQLQNNNIFAIMELILSIGNFINFGTNRGNASGFKIDSINKMADTKSNIREKYTLVHYLIELLESTQPELLKVFDEIPSVVDAATLSFNQSSSEIKLLRAGLIKLEKEIFVRQPKSVEPKPDDETINNNGEDDINNTSSDEKTEGQQQRQGEEEENDESESTGNSFADSLKKKKSQVNTNSTSDSKQSLEPLKDDDPLKLKLSEFLLASKTELDDTETLIAETEVLFKSICKFFGEDSTKIQPEEFLAIFKKFNDKFIMSKKDLEIEKSIKDKSTQRKNEKERKEMEIKKSKLEMIHSKLKKIGSPSSSNRILASNESSPTSSTSSVVHQHDDEDEETIKEYINNPSPSQQSNSSEEEGMMDDLLNLIRDGNFRELRRMNLQQKKPVRTKRVIAKQPTRPQALDTPSSTYSSISSIYDAEPLDMSDQEDEDEEEEEDEEEEEEEEEGDDDNDNDEEEGEN.

The GBD/FH3 domain occupies 10–379; the sequence is KKEESPQSID…KMNNGESYLD (370 aa). A coiled-coil region spans residues 401–448; the sequence is SGEKAVLIQKEIEDLKKQKKRDQDKLAEKDKLLTKLAKRMRKMEEAIK. One can recognise an FH1 domain in the interval 457-544; it reads NNQIEIESPP…GSGDGIPLPP (88 aa). Composition is skewed to polar residues over residues 462 to 479 and 518 to 534; these read IESPPDSSTSTPQETTPG and LDTTNQQGSTDASQTEA. Disordered stretches follow at residues 462-490, 507-569, 868-948, 1026-1045, 1054-1089, and 1133-1214; these read IESPPDSSTSTPQETTPGGTKVPLKTSPV, APNG…SRPP, PKSV…PLKD, DKSTQRKNEKERKEMEIKKS, LKKIGSPSSSNRILASNESSPTSSTSSVVHQHDDED, and MNLQ…EGEN. Over residues 541-554 the composition is skewed to pro residues; that stretch reads PLPPGAPPPPPPPG. The region spanning 562–1037 is the FH2 domain; it reads PQLCSRPPSI…STQRKNEKER (476 aa). Residues 868–877 show a composition bias toward basic and acidic residues; sequence PKSVEPKPDD. Over residues 930 to 940 the composition is skewed to polar residues; the sequence is QVNTNSTSDSK. Residues 1019–1056 adopt a coiled-coil conformation; that stretch reads EIEKSIKDKSTQRKNEKERKEMEIKKSKLEMIHSKLKK. The span at 1059 to 1071 shows a compositional bias: polar residues; the sequence is SPSSSNRILASNE. In terms of domain architecture, DAD spans 1065–1095; it reads RILASNESSPTSSTSSVVHQHDDEDEETIKE. The segment covering 1161-1171 has biased composition (low complexity); sequence SSTYSSISSIY. Over residues 1174-1214 the composition is skewed to acidic residues; that stretch reads EPLDMSDQEDEDEEEEEDEEEEEEEEEGDDDNDNDEEEGEN. A coiled-coil region spans residues 1176–1207; sequence LDMSDQEDEDEEEEEDEEEEEEEEEGDDDNDN.

It belongs to the formin homology family. Diaphanous subfamily. Interacts (via GBD/FH3 domain) with activated Rho-GTPases.

Its function is as follows. Formins play an important role in the nucleation of actin and the formation of linear actin filaments. The protein is Formin-D (forD) of Dictyostelium discoideum (Social amoeba).